The primary structure comprises 729 residues: MGDYGFGVLVQSNTGNKSAFPVRFHPHLQPPHHHQNATPNPAAFINNNTAANGSSAGSAWLFPAPATHNIQDEILGSEKAKSQQQEQQDPLEKQQLSPSPGQEAGILPETEKAKAEENPGDSSSENSNGKEKLRIESPVLTGFDYQEATGLGTSTQPLTSSASSLTGFSNWSAAIAPSSSTIINEDASFFHQGGVPGASANNGALLFQNFPHHVSPGFGGSFSPQIGPLSQHHPHHPHFQHHHSQHQQQRRSPASPHPPPFTHRSAAFNQLPHLANNLNKPPSPWSSYQSPSPTPSSSWSPGGGGYGGWGASQGRDHRRGLNGGITPLNSISPLKKNFASNHIQLQKYARPSSAFAPKSWMEDSLNRADNIFPFPERPRTFDMHSLESSLIDIMRAENDSIKGRLNYSYPGSDSSLLINARTYGRRRGQSSLFPMEDGFLDDGRGDQPLHSGLGSPHCFTHQNGERVERYSRKVFVGGLPPDIDEDEITASFRRFGPLIVDWPHKAESKSYFPPKGYAFLLFQDESSVQALIDACIEEDGKLYLCVSSPTIKDKPVQIRPWNLSDSDFVMDGSQPLDPRKTIFVGGVPRPLRAVELAMIMDRLYGGVCYAGIDTDPELKYPKGAGRVAFSNQQSYIAAISARFVQLQHGEIDKRVEVKPYVLDDQLCDECQGARCGGKFAPFFCANVTCLQYYCEYCWAAIHSRAGREFHKPLVKEGGDRPRHISFRWN.

Disordered stretches follow at residues 20 to 50 (FPVR…NNTA) and 78 to 133 (EKAK…KEKL). Over residues 24–35 (FHPHLQPPHHHQ) the composition is skewed to basic residues. The segment covering 83–96 (QQQEQQDPLEKQQL) has biased composition (low complexity). A phosphoserine mark is found at Ser-97, Ser-99, and Ser-137. The interval 218 to 324 (FGGSFSPQIG…RDHRRGLNGG (107 aa)) is disordered. Over residues 232–249 (HHPHHPHFQHHHSQHQQQ) the composition is skewed to basic residues. Ser-252 and Ser-255 each carry phosphoserine. Over residues 285-300 (WSSYQSPSPTPSSSWS) the composition is skewed to low complexity. Gly residues predominate over residues 301–311 (PGGGGYGGWGA). Thr-326 bears the Phosphothreonine mark. 2 positions are modified to phosphoserine: Ser-330 and Ser-332. RRM domains lie at 472-563 (RKVF…PWNL) and 580-662 (KTIF…PYVL). An RNA-binding region spans residues 541–543 (KLY). 8 residues coordinate Zn(2+): Cys-667, Cys-675, Cys-684, Cys-689, Cys-694, Cys-697, His-702, and His-710.

It belongs to the RRM CPEB family. Interacts with TOB1. Highly expressed in brain, including hippocampus, amygdala, granule and Purkinje cells of the cerebellum (at protein level). Expressed in spinal cord (at protein level). Expressed in kidney, lung and heart (at protein level). Expressed in liver (at protein level). Expressed in spleen and testis (at protein level). Weakly expressed in ovary and in granular cells of dentate gyrus and the pyramidal cells of CA3 and CA1 of the hippocampus.

It is found in the cytoplasm. The protein localises to the cell projection. The protein resides in the dendrite. It localises to the dendritic spine. Its subcellular location is the postsynaptic density. It is found in the axon. The protein localises to the growth cone. The protein resides in the endoplasmic reticulum. It localises to the perinuclear region. Sequence-specific RNA-binding protein that binds to the cytoplasmic polyadenylation element (CPE), an uridine-rich sequence element (consensus sequence 5'-UUUUUAU-3') within the mRNA 3'-UTR. RNA binding results in a clear conformational change analogous to the Venus fly trap mechanism. Regulates activation of unfolded protein response (UPR) in the process of adaptation to ER stress in liver, by maintaining translation of CPE-regulated mRNAs in conditions in which global protein synthesis is inhibited. Required for cell cycle progression, specifically for cytokinesis and chromosomal segregation. Plays a role as an oncogene promoting tumor growth and progression by positively regulating translation of t-plasminogen activator/PLAT. Stimulates proliferation of melanocytes. In contrast to CPEB1 and CPEB3, does not play role in synaptic plasticity, learning and memory. The sequence is that of Cytoplasmic polyadenylation element-binding protein 4 (Cpeb4) from Mus musculus (Mouse).